A 952-amino-acid chain; its full sequence is G patch domain-containing protein 1 homolog (952 aa).

Disordered regions lie at residues glutamine 104 to arginine 127, glycine 165 to glutamate 233, aspartate 320 to serine 345, arginine 370 to serine 432, proline 660 to proline 711, and valine 822 to histidine 952. A compositionally biased stretch (basic and acidic residues) spans arginine 107–aspartate 123. In terms of domain architecture, G-patch spans arginine 153–glycine 199. Acidic residues predominate over residues aspartate 214 to glutamate 233. Basic residues predominate over residues proline 323 to glutamine 333. Composition is skewed to basic and acidic residues over residues proline 375 to proline 402, glutamine 414 to serine 432, and isoleucine 679 to lysine 691. Positions alanine 886–aspartate 896 are enriched in low complexity. 2 stretches are compositionally biased toward basic residues: residues lysine 906 to lysine 934 and histidine 941 to histidine 952.

It belongs to the GPATCH1 family.

This is G patch domain-containing protein 1 homolog from Drosophila melanogaster (Fruit fly).